The chain runs to 89 residues: Acylphosphatase (89 aa).

An Acylphosphatase-like domain is found at 3–89 (ALEIYVSGNV…ENYESFEVAY (87 aa)). Active-site residues include Arg-18 and Asn-36.

The protein belongs to the acylphosphatase family.

It carries out the reaction an acyl phosphate + H2O = a carboxylate + phosphate + H(+). The protein is Acylphosphatase (acyP) of Archaeoglobus fulgidus (strain ATCC 49558 / DSM 4304 / JCM 9628 / NBRC 100126 / VC-16).